Reading from the N-terminus, the 643-residue chain is 1-deoxy-D-xylulose-5-phosphate synthase (643 aa).

Thiamine diphosphate is bound by residues H78 and 119–121 (AHS). D150 contributes to the Mg(2+) binding site. Thiamine diphosphate-binding positions include 151 to 152 (GS), N179, Y288, and E370. N179 provides a ligand contact to Mg(2+).

It belongs to the transketolase family. DXPS subfamily. As to quaternary structure, homodimer. It depends on Mg(2+) as a cofactor. Thiamine diphosphate serves as cofactor.

It carries out the reaction D-glyceraldehyde 3-phosphate + pyruvate + H(+) = 1-deoxy-D-xylulose 5-phosphate + CO2. The protein operates within metabolic intermediate biosynthesis; 1-deoxy-D-xylulose 5-phosphate biosynthesis; 1-deoxy-D-xylulose 5-phosphate from D-glyceraldehyde 3-phosphate and pyruvate: step 1/1. Functionally, catalyzes the acyloin condensation reaction between C atoms 2 and 3 of pyruvate and glyceraldehyde 3-phosphate to yield 1-deoxy-D-xylulose-5-phosphate (DXP). In Brucella suis (strain ATCC 23445 / NCTC 10510), this protein is 1-deoxy-D-xylulose-5-phosphate synthase.